The following is a 159-amino-acid chain: Transcriptional repressor NrdR (159 aa).

A zinc finger spans residues 3 to 34 (CPFCRHDDTQVVDSRVSEDGAAIRRRRRCSAC). The 91-residue stretch at 49-139 (PAVVKKDGSR…VYRRFEDVSE (91 aa)) folds into the ATP-cone domain.

Belongs to the NrdR family. The cofactor is Zn(2+).

Its function is as follows. Negatively regulates transcription of bacterial ribonucleotide reductase nrd genes and operons by binding to NrdR-boxes. This Burkholderia pseudomallei (strain 1106a) protein is Transcriptional repressor NrdR.